We begin with the raw amino-acid sequence, 599 residues long: Prostaglandin G/H synthase 1 (599 aa).

A signal peptide spans 1-23 (MSRSLLLWFLLFLLLLPPLPVLL). The region spanning 31–69 (PVNPCCYYPCQHQGICVRFGLDRYQCDCTRTGYSGPNCT) is the EGF-like domain. 4 cysteine pairs are disulfide-bonded: Cys-35–Cys-46, Cys-36–Cys-158, Cys-40–Cys-56, and Cys-58–Cys-68. Asn-67, Asn-103, and Asn-143 each carry an N-linked (GlcNAc...) asparagine glycan. His-206 serves as the catalytic Proton acceptor. Residue Tyr-384 is the For cyclooxygenase activity of the active site. Residue His-387 coordinates heme b. Residues Cys-568 and Cys-574 are joined by a disulfide bond.

It belongs to the prostaglandin G/H synthase family. In terms of assembly, homodimer. Heme b serves as cofactor.

It localises to the microsome membrane. It is found in the endoplasmic reticulum membrane. It catalyses the reaction (5Z,8Z,11Z,14Z)-eicosatetraenoate + AH2 + 2 O2 = prostaglandin H2 + A + H2O. The catalysed reaction is (5Z,8Z,11Z,14Z)-eicosatetraenoate + 2 O2 = prostaglandin G2. It carries out the reaction prostaglandin G2 + AH2 = prostaglandin H2 + A + H2O. The enzyme catalyses (9Z,12Z)-octadecadienoate + AH2 + O2 = (9R)-hydroxy-(10E,12Z)-octadecadienoate + A + H2O. It catalyses the reaction (9Z,12Z)-octadecadienoate + AH2 + O2 = (9S)-hydroxy-(10E,12Z)-octadecadienoate + A + H2O. The catalysed reaction is (9Z,12Z)-octadecadienoate + AH2 + O2 = (13S)-hydroxy-(9Z,11E)-octadecadienoate + A + H2O. It carries out the reaction (9Z,12Z)-octadecadienoate + AH2 + O2 = (13R)-hydroxy-(9Z,11E)-octadecadienoate + A + H2O. Its pathway is lipid metabolism; prostaglandin biosynthesis. The cyclooxygenase activity is inhibited by nonsteroidal anti-inflammatory drugs (NSAIDs) including ibuprofen, flurbiprofen, ketoprofen, naproxen, flurbiprofen, anirolac, fenclofenac and diclofenac. Its function is as follows. Dual cyclooxygenase and peroxidase that plays an important role in the biosynthesis pathway of prostanoids, a class of C20 oxylipins mainly derived from arachidonate ((5Z,8Z,11Z,14Z)-eicosatetraenoate, AA, C20:4(n-6)), with a particular role in the inflammatory response. The cyclooxygenase activity oxygenates AA to the hydroperoxy endoperoxide prostaglandin G2 (PGG2), and the peroxidase activity reduces PGG2 to the hydroxy endoperoxide prostaglandin H2 (PGH2), the precursor of all 2-series prostaglandins and thromboxanes. This complex transformation is initiated by abstraction of hydrogen at carbon 13 (with S-stereochemistry), followed by insertion of molecular O2 to form the endoperoxide bridge between carbon 9 and 11 that defines prostaglandins. The insertion of a second molecule of O2 (bis-oxygenase activity) yields a hydroperoxy group in PGG2 that is then reduced to PGH2 by two electrons. Involved in the constitutive production of prostanoids in particular in the stomach and platelets. In gastric epithelial cells, it is a key step in the generation of prostaglandins, such as prostaglandin E2 (PGE2), which plays an important role in cytoprotection. In platelets, it is involved in the generation of thromboxane A2 (TXA2), which promotes platelet activation and aggregation, vasoconstriction and proliferation of vascular smooth muscle cells. Can also use linoleate (LA, (9Z,12Z)-octadecadienoate, C18:2(n-6)) as substrate and produce hydroxyoctadecadienoates (HODEs) in a regio- and stereospecific manner, being (9R)-HODE ((9R)-hydroxy-(10E,12Z)-octadecadienoate) and (13S)-HODE ((13S)-hydroxy-(9Z,11E)-octadecadienoate) its major products. The protein is Prostaglandin G/H synthase 1 of Homo sapiens (Human).